A 257-amino-acid polypeptide reads, in one-letter code: Imidazole glycerol phosphate synthase subunit HisF (257 aa).

Catalysis depends on residues Asp11 and Asp130.

Belongs to the HisA/HisF family. Heterodimer of HisH and HisF.

It localises to the cytoplasm. It catalyses the reaction 5-[(5-phospho-1-deoxy-D-ribulos-1-ylimino)methylamino]-1-(5-phospho-beta-D-ribosyl)imidazole-4-carboxamide + L-glutamine = D-erythro-1-(imidazol-4-yl)glycerol 3-phosphate + 5-amino-1-(5-phospho-beta-D-ribosyl)imidazole-4-carboxamide + L-glutamate + H(+). It functions in the pathway amino-acid biosynthesis; L-histidine biosynthesis; L-histidine from 5-phospho-alpha-D-ribose 1-diphosphate: step 5/9. In terms of biological role, IGPS catalyzes the conversion of PRFAR and glutamine to IGP, AICAR and glutamate. The HisF subunit catalyzes the cyclization activity that produces IGP and AICAR from PRFAR using the ammonia provided by the HisH subunit. This is Imidazole glycerol phosphate synthase subunit HisF from Aliivibrio fischeri (strain MJ11) (Vibrio fischeri).